The sequence spans 544 residues: Phosphoacetylglucosamine mutase (544 aa).

Serine 66 (phosphoserine intermediate) is an active-site residue. The Mg(2+) site is built by serine 66, aspartate 290, aspartate 292, and aspartate 294. Substrate contacts are provided by residues 387–389 (EAN), 512–516 (RASGT), and arginine 521.

This sequence belongs to the phosphohexose mutase family. Mg(2+) is required as a cofactor.

The enzyme catalyses N-acetyl-alpha-D-glucosamine 1-phosphate = N-acetyl-D-glucosamine 6-phosphate. It functions in the pathway nucleotide-sugar biosynthesis; UDP-N-acetyl-alpha-D-glucosamine biosynthesis; N-acetyl-alpha-D-glucosamine 1-phosphate from alpha-D-glucosamine 6-phosphate (route I): step 2/2. Functionally, catalyzes the conversion of GlcNAc-6-P into GlcNAc-1-P during the synthesis of uridine diphosphate/UDP-GlcNAc, which is a biosynthetic precursor of chitin and also supplies the amino sugars for N-linked oligosaccharides of glycoproteins. This is Phosphoacetylglucosamine mutase from Candida albicans (Yeast).